The primary structure comprises 195 residues: Imidazoleglycerol-phosphate dehydratase (195 aa).

This sequence belongs to the imidazoleglycerol-phosphate dehydratase family.

It is found in the cytoplasm. It catalyses the reaction D-erythro-1-(imidazol-4-yl)glycerol 3-phosphate = 3-(imidazol-4-yl)-2-oxopropyl phosphate + H2O. It functions in the pathway amino-acid biosynthesis; L-histidine biosynthesis; L-histidine from 5-phospho-alpha-D-ribose 1-diphosphate: step 6/9. The sequence is that of Imidazoleglycerol-phosphate dehydratase from Geobacter metallireducens (strain ATCC 53774 / DSM 7210 / GS-15).